The sequence spans 464 residues: UDP-N-acetylmuramate--L-alanine ligase (464 aa).

ATP is bound at residue 112–118; sequence GTHGKTT.

Belongs to the MurCDEF family.

The protein localises to the cytoplasm. It catalyses the reaction UDP-N-acetyl-alpha-D-muramate + L-alanine + ATP = UDP-N-acetyl-alpha-D-muramoyl-L-alanine + ADP + phosphate + H(+). It participates in cell wall biogenesis; peptidoglycan biosynthesis. Functionally, cell wall formation. This is UDP-N-acetylmuramate--L-alanine ligase from Acidithiobacillus ferrooxidans (strain ATCC 23270 / DSM 14882 / CIP 104768 / NCIMB 8455) (Ferrobacillus ferrooxidans (strain ATCC 23270)).